A 418-amino-acid chain; its full sequence is Putative competence-damage inducible protein (418 aa).

This sequence belongs to the CinA family.

In Streptococcus pneumoniae (strain JJA), this protein is Putative competence-damage inducible protein.